We begin with the raw amino-acid sequence, 277 residues long: Phosphonoacetaldehyde hydrolase-like protein (277 aa).

The protein belongs to the HAD-like hydrolase superfamily. PhnX family.

The polypeptide is Phosphonoacetaldehyde hydrolase-like protein (phnX2) (Syntrophobacter fumaroxidans (strain DSM 10017 / MPOB)).